Here is a 740-residue protein sequence, read N- to C-terminus: MAEGSYRKESEGYNVEDMDEGSDEVGEEDMVEGNDYEEFGAFGGYGALTSFDIRILRAFGSLGPGFRILANEPWELENPVLARTLLEAFRMDPETLANETAARAANVARAAASNQAARAAATAARATYNQVVTNHHPVATHQASGGDTQPMTSAAQAPAATPETSVASPHSSRMLVNSEMAAPGAPARSPQPQTSSQAQEAAAEGPSTACAFPQASRASEMDATRPKTAFLGQNDAFDFSQPAGVSGMAFPRPKRPAPAQEAATEGPSVASRGTQAASAGEGAATRPKTTKSGKALAKTRWVEPQNVVAAAAAKAKMATSIPEPESAAATSQQSAEPWARMGGKRTKKSKHLDDEYESGEEEREPPAVPPTWRASQPLLTTARPQVAPRPSMALRSQVPSRHVLCLPPRNVTLLQERANKLVKYLMIKDYKKIPIKRSDMLKDVIREYDEHFPEIIERATYTLEKKFGIHLKEIDKEEHLYILVCTRDSSARLLGKTKDTPRLSLLLVILGVIFMNGNRASEAVLWEALRKMGLRPGVRHPFLGDLRKLITEDFVKQKYLEYKKVPNSSPPEYEFLWGLRACHETSKMRVLRFIAQYQNRDPREWRAHFLEAVDDAFKTMDVDMAEEHARAQMRAQMNIGEEALIGRWSWDDIQVELLTWDEDGDFGDAWSRIPFAFWARYHQYILNSNRPNRRGTWRAGVSSGTNGAASASMLDGPSTSSTIRTRNAARTSASFFSWIQ.

Residues 1 to 11 (MAEGSYRKESE) are compositionally biased toward basic and acidic residues. Disordered regions lie at residues 1-27 (MAEG…EVGE), 139-208 (ATHQ…GPST), 242-298 (PAGV…ALAK), and 321-377 (IPEP…ASQP). Residues 14–27 (NVEDMDEGSDEVGE) are compositionally biased toward acidic residues. 2 stretches are compositionally biased toward polar residues: residues 141–155 (HQAS…TSAA) and 162–175 (PETS…SRML). Residues 185–207 (APARSPQPQTSSQAQEAAAEGPS) are compositionally biased toward low complexity. The segment covering 321–337 (IPEPESAAATSQQSAEP) has biased composition (low complexity). Residues 354–363 (DEYESGEEER) show a composition bias toward acidic residues. The 199-residue stretch at 414–612 (LQERANKLVK…REWRAHFLEA (199 aa)) folds into the MAGE domain. Residues 697–722 (WRAGVSSGTNGAASASMLDGPSTSST) form a disordered region.

Interacts with TRIM27.

In terms of biological role, may enhance ubiquitin ligase activity of RING-type zinc finger-containing E3 ubiquitin-protein ligases. Proposed to act through recruitment and/or stabilization of the Ubl-conjugating enzyme (E2) at the E3:substrate complex. The polypeptide is Melanoma-associated antigen D4 (MAGED4) (Bos taurus (Bovine)).